Reading from the N-terminus, the 163-residue chain is Nucleotide-binding protein Dde_2479 (163 aa).

It belongs to the YajQ family.

Nucleotide-binding protein. The polypeptide is Nucleotide-binding protein Dde_2479 (Oleidesulfovibrio alaskensis (strain ATCC BAA-1058 / DSM 17464 / G20) (Desulfovibrio alaskensis)).